Reading from the N-terminus, the 1655-residue chain is Protein scribble homolog (1655 aa).

Residues 1–818 (MLKCIPLWRC…MRVWRERMVE (818 aa)) are sufficient for targeting to adherens junction and to inhibit cell proliferation. Phosphoserine is present on S37. LRR repeat units follow at residues 37–58 (SLEE…FFRL), 60–81 (NLRK…VANF), 83–104 (QLVE…IKFC), 106–127 (ALEI…FTQL), 129–150 (SLAH…VGNL), 152–174 (NLVT…SFLV), 175–197 (KLEQ…GALP), 198–219 (NLRE…LGNL), 221–243 (RLVC…GGLV), 244–265 (LLTD…IGQL), 267–288 (QLSI…IGDC), 290–312 (NLSE…GKLT), 313–334 (KLTN…IGGC), 336–357 (ALSV…LAHT), 359–381 (ELHV…THLN), and 382–402 (LKAL…QTED). At T378 the chain carries Phosphothreonine. Disordered regions lie at residues 417–440 (PQQP…WSDA), 459–606 (DAEE…IRKD), and 628–702 (LLQG…VSAP). A coiled-coil region spans residues 458 to 474 (EDAEEAAAEKRGLQRRA). The residue at position 475 (T475) is a Phosphothreonine. Over residues 479 to 494 (SELKVMKRSIEGRRSE) the composition is skewed to basic and acidic residues. The residue at position 504 (S504) is a Phosphoserine. Residues 537–555 (EGPSAEAQGGSQQEATTAG) show a composition bias toward low complexity. Composition is skewed to acidic residues over residues 556–565 (GEEDAEEDYQ) and 660–694 (EEEE…EEDK). Residues 656-701 (RAQKEEEEEEEGSPQEEEEEEEEENRAEEEEASTEEEDKEGAVVSA) adopt a coiled-coil conformation. A Phosphoserine modification is found at S688. T689 is subject to Phosphothreonine. Phosphoserine occurs at positions 708 and 764. The segment at 717 to 1229 (IEPARIEEEE…SLESISSIDR (513 aa)) is interaction with ARHGEF7. Residues 728-815 (TLTILRQTGG…AVQMRVWRER (88 aa)) enclose the PDZ 1 domain. The interval 728–1194 (TLTILRQTGG…TVLVCDGFEA (467 aa)) is required for interaction with VIM. T826 is modified (phosphothreonine). Residues 827–853 (PLRPEDDYSPRERRGGGLRLPLLPPES) are disordered. The span at 829 to 841 (RPEDDYSPRERRG) shows a compositional bias: basic and acidic residues. A phosphoserine mark is found at S835, S853, S875, and S939. PDZ domains follow at residues 862–950 (VACL…EREA), 1004–1093 (EIRL…RRDP), and 1100–1194 (ELCI…GFEA). Positions 1105-1117 (KAPGERLGISIRG) are interaction with tick-borne encephalitis virus RNA-directed RNA polymerase NS5. Residues S1140, S1220, S1223, S1226, S1232, S1276, S1279, S1295, S1298, S1306, and S1309 each carry the phosphoserine modification. Residues 1227-1242 (IDRELSPEGPGKEKEL) show a composition bias toward basic and acidic residues. The disordered stretch occupies residues 1227-1246 (IDRELSPEGPGKEKELPGQT). The interval 1277–1489 (AGSVQRVPSG…APERALSPAE (213 aa)) is disordered. Residues 1302 to 1311 (QQPPSPPSPD) are compositionally biased toward pro residues. T1342 carries the post-translational modification Phosphothreonine. S1348 carries the post-translational modification Phosphoserine. Residues 1353-1365 (SFRERQKYFELEV) are compositionally biased toward basic and acidic residues. Residue S1378 is modified to Phosphoserine. Residues 1379 to 1419 (LVGADDLRKMQEEEARKLQQKRAQMLREAAEAGAEARLALD) are a coiled coil. Over residues 1383 to 1395 (DDLRKMQEEEARK) the composition is skewed to basic and acidic residues. Positions 1409 to 1421 (EAGAEARLALDGE) are enriched in low complexity. The segment covering 1422 to 1432 (TLGEEEQEDEQ) has biased composition (acidic residues). Phosphoserine is present on residues S1437, S1445, and S1448. A compositionally biased stretch (basic and acidic residues) spans 1461–1472 (AKAERRHQERLR). Phosphoserine is present on residues S1475, S1486, and S1508. Residues 1520-1568 (LSRSQEGRGTRGPLERLAEAPSPAPTPSPTPVEDLGPQTSTSPGRLPLS) form a disordered region. A compositionally biased stretch (basic and acidic residues) spans 1524 to 1537 (QEGRGTRGPLERLA). S1541 bears the Phosphoserine mark. T1545 carries the post-translational modification Phosphothreonine. Phosphoserine occurs at positions 1547, 1561, and 1591. The tract at residues 1622–1655 (GRPSPGAVGPEDVALCSSRRPVRPGRRGLGPVPS) is disordered.

The protein belongs to the LAP (LRR and PDZ) protein family. Interacts with UBE3A. Interacts with PAK1 and PAK2. Interacts (via PDZ domains) with VANGL2. Interacts (via PDZ domains) with LPP and TRIP6; the interaction is direct. Interacts (via PDZ domains) with TJP2. Interacts (via PDZ domains) with APC; may mediate APC targeting to adherens junctions of epithelial cells. Interacts (via PDZ domains) with TSHR; regulates TSHR trafficking and function. Interacts with ARHGEF7 and GIT1; interacts directly with ARHGEF7. Interacts with CTNNB1. Interacts with MAPK12. Interacts (via PDZ domains 1 and 3) with MCC. Interacts with DLG5. Interacts with STK4/MST1 and LATS1 in the presence of DLG5. Interacts (via PDZ domain 3) with CRTAM (via PDZ-binding motif); the interaction promotes CRTAM and SCRIB polarization in a subset of CD4+ T-cells. Interacts with YES1, when YES1 is in a closed conformation; the interaction facilitates YES1 autophosphorylation. Interacts (via PDZ domains) with VIM; the interaction protects SCRIB from proteasomal degradation and facilitates SCRIB localization to intermediate filaments, the interaction is reduced by cell contact inhibition. In terms of assembly, (Microbial infection) Interacts (via fourth PDZ domain) with tick-borne encephalitis virus RNA-directed RNA polymerase NS5; this interaction targets viral NS5 to the cell membrane periphery and nucleus and prevents STAT1 phosphorylation, and thus, the activation of the JAK-STAT signaling pathway. Interacts with HPV E6. Interacts with influenza A virus protein NS1; the interaction results in the translocation of SCRIB from the cell membrane to perinuclear puncta. Post-translationally, ubiquitinated; targeted for UBE3A-dependent multiubiquitination in the presence of high-risk HPV E6 proteins and degraded. Palmitoylated. Could be depalmitoylated by LYPLA1 and/or LYPLA2. Palmitoylation of SCRIB by ZDHHC7 is required for its localization to cell-cell junctions, function in the establishement of epithelial cell polarity and the regulation of downstream signaling pathways important for epithelial cell differentiation. In terms of tissue distribution, expressed in kidney, skeletal muscles, liver, lung, breast, intestine, placenta and skin mainly in epithelial cells (at protein level).

The protein resides in the cell membrane. It is found in the cell junction. It localises to the adherens junction. Its subcellular location is the cell projection. The protein localises to the lamellipodium. The protein resides in the cytoplasm. It is found in the postsynapse. It localises to the presynapse. In terms of biological role, scaffold protein involved in different aspects of polarized cell differentiation regulating epithelial and neuronal morphogenesis and T-cell polarization. Via its interaction with CRTAM, required for the late phase polarization of a subset of CD4+ T-cells, which in turn regulates TCR-mediated proliferation and IFNG and IL22 production. Plays a role in cell directional movement, cell orientation, cell sheet organization and Golgi complex polarization at the cell migration front. Promotes epithelial cell layer barrier function via maintaining cell-cell adhesion. Most probably functions in the establishment of apico-basal cell polarity. May function in cell proliferation regulating progression from G1 to S phase and as a positive regulator of apoptosis for instance during acinar morphogenesis of the mammary epithelium. May regulate cell invasion via MAPK-mediated cell migration and adhesion. May play a role in exocytosis and in the targeting of synaptic vesicles to synapses. Functions as an activator of Rac GTPase activity. The protein is Protein scribble homolog of Homo sapiens (Human).